We begin with the raw amino-acid sequence, 147 residues long: UPF0460 protein in nifX-nifW intergenic region (147 aa).

Belongs to the UPF0460 family.

In Frankia alni, this protein is UPF0460 protein in nifX-nifW intergenic region.